A 337-amino-acid chain; its full sequence is Ornithine carbamoyltransferase (337 aa).

Carbamoyl phosphate-binding positions include Ser57–Thr60, Gln84, Arg108, and His135–Gln138. Residues Asn167, Asp231, and Ser235–Met236 contribute to the L-ornithine site. Carbamoyl phosphate contacts are provided by residues Cys272–Leu273 and Arg317.

It belongs to the aspartate/ornithine carbamoyltransferase superfamily. OTCase family.

Its subcellular location is the cytoplasm. The enzyme catalyses carbamoyl phosphate + L-ornithine = L-citrulline + phosphate + H(+). The protein operates within amino-acid degradation; L-arginine degradation via ADI pathway; carbamoyl phosphate from L-arginine: step 2/2. Its function is as follows. Reversibly catalyzes the transfer of the carbamoyl group from carbamoyl phosphate (CP) to the N(epsilon) atom of ornithine (ORN) to produce L-citrulline. This is Ornithine carbamoyltransferase from Streptococcus equi subsp. zooepidemicus (strain MGCS10565).